A 472-amino-acid chain; its full sequence is Lycopene beta cyclase, chloroplastic (472 aa).

The transit peptide at M1–T25 directs the protein to the chloroplast. The tract at residues M1–S27 is disordered. L62 to P90 serves as a coordination point for NAD(+).

The protein belongs to the lycopene cyclase family. As to expression, expressed in flower buds and lips. Detected in roots and leaves.

Its subcellular location is the plastid. The protein resides in the chloroplast. The enzyme catalyses a carotenoid psi-end group = a carotenoid beta-end derivative. The protein operates within carotenoid biosynthesis; beta-carotene biosynthesis. Its pathway is carotenoid biosynthesis; beta-zeacarotene biosynthesis. In terms of biological role, catalyzes the double cyclization reaction which converts lycopene to beta-carotene and neurosporene to beta-zeacarotene. In Oncidium hybrid cultivar (Orchid), this protein is Lycopene beta cyclase, chloroplastic (LCY-B).